Consider the following 86-residue polypeptide: Centromere protein W (86 aa).

The protein belongs to the CENP-W/WIP1 family. Heterodimer with CENPT; this dimer coassembles with CENPS-CENPX heterodimers at centromeres to form the tetrameric CENP-T-W-S-X complex, which is a subcomplex of the large constitutive centromere-associated network (CCAN, also known as the interphase centromere complex or ICEN). Interacts with NPM1.

Its subcellular location is the nucleus. The protein resides in the chromosome. It is found in the centromere. The protein localises to the kinetochore. It localises to the nucleus matrix. Its subcellular location is the nucleolus. Component of the CENPA-NAC (nucleosome-associated) complex, a complex that plays a central role in assembly of kinetochore proteins, mitotic progression and chromosome segregation. The CENPA-NAC complex recruits the CENPA-CAD (nucleosome distal) complex and may be involved in incorporation of newly synthesized CENPA into centromeres. Part of a nucleosome-associated complex that binds specifically to histone H3-containing nucleosomes at the centromere, as opposed to nucleosomes containing CENPA. Component of the heterotetrameric CENP-T-W-S-X complex that binds and supercoils DNA, and plays an important role in kinetochore assembly. CENPW has a fundamental role in kinetochore assembly and function. It is one of the inner kinetochore proteins, with most further proteins binding downstream. Required for normal chromosome organization and normal progress through mitosis. The protein is Centromere protein W (Cenpw) of Rattus norvegicus (Rat).